Here is a 615-residue protein sequence, read N- to C-terminus: Delta(14)-sterol reductase LBR (615 aa).

One can recognise a Tudor domain in the interval 1–62 (MPSRKFADGE…DIKPLTSFRQ (62 aa)). Topologically, residues 1–211 (MPSRKFADGE…IRAKDLEFGG (211 aa)) are nuclear. The segment at 52-109 (NDIKPLTSFRQRKGGSTSSSPSRRRGSRSRSRSRSPGRPPKSARRSASASHQADIKEA) is disordered. Lys55 is subject to N6-acetyllysine. Phosphothreonine is present on Thr58. A phosphoserine mark is found at Ser59 and Ser67. Residues Ser71 and Ser86 each carry the phosphoserine; by CDK1 modification. Basic residues predominate over residues 73–86 (SRRRGSRSRSRSRS). Residues Ser97 and Ser99 each carry the phosphoserine modification. Residue Thr118 is modified to Phosphothreonine. Ser128 carries the post-translational modification Phosphoserine. Position 200 is a phosphothreonine (Thr200). A run of 8 helical transmembrane segments spans residues 212–232 (VPGVFLIMFGLPVFLFLLLLM), 258–278 (VFGVYLLWFLIQVLFYLLPIG), 299–319 (FYAFILTSAVIGTSLFQGVEF), 326–346 (FLQFALAATVFCVVLSVYLYM), 386–406 (FCELRPGLIGWVVINLVMLLA), 447–467 (IIHDGFGFMLAFGDLVWVPFI), 481–501 (EVSWPMASLIIVLKLCGYVIF), and 561–581 (PCGFNHILPYFYIIYFTMLLV). An N6-acetyllysine mark is found at Lys594 and Lys601.

It belongs to the ERG4/ERG24 family. As to quaternary structure, interacts with CBX5. Interacts with DNA. Interaction with DNA is sequence independent with higher affinity for supercoiled and relaxed circular DNA than linear DNA. Interacts with lamin B. Interacts with CLNK. Interacts with TMEM147; promoting LBR localization to the nucleus inner membrane. Phosphorylated by CDK1 in mitosis when the inner nuclear membrane breaks down into vesicles that dissociate from the lamina and the chromatin. It is phosphorylated by different protein kinases in interphase when the membrane is associated with these structures. Phosphorylation of LBR and HP1 proteins may be responsible for some of the alterations in chromatin organization and nuclear structure which occur at various times during the cell cycle. Phosphorylated by SRPK1. In late anaphase LBR is dephosphorylated, probably by PP1 and/or PP2A, allowing reassociation with chromatin. Expressed in the bone marrow, liver, heart, adrenal gland, lung, placenta and uterus. Expressed in osteoclasts and osteoblast-like cells.

Its subcellular location is the nucleus inner membrane. It localises to the endoplasmic reticulum membrane. The protein localises to the cytoplasm. It is found in the nucleus. The catalysed reaction is 5alpha-cholest-8,14-dien-3beta-ol + NADPH + H(+) = 5alpha-cholest-8-en-3beta-ol + NADP(+). It catalyses the reaction 4,4-dimethyl-5alpha-cholesta-8,24-dien-3beta-ol + NADP(+) = 4,4-dimethyl-5alpha-cholesta-8,14,24-trien-3beta-ol + NADPH + H(+). It carries out the reaction 4,4-dimethyl-8,14-cholestadien-3beta-ol + NADPH + H(+) = 4,4-dimethyl-5alpha-cholest-8-en-3beta-ol + NADP(+). It participates in steroid biosynthesis; cholesterol biosynthesis. Catalyzes the reduction of the C14-unsaturated bond of lanosterol, as part of the metabolic pathway leading to cholesterol biosynthesis. Plays a critical role in myeloid cell cholesterol biosynthesis which is essential to both myeloid cell growth and functional maturation. Mediates the activation of NADPH oxidases, perhaps by maintaining critical levels of cholesterol required for membrane lipid raft formation during neutrophil differentiation. Anchors the lamina and the heterochromatin to the inner nuclear membrane. The protein is Delta(14)-sterol reductase LBR (LBR) of Homo sapiens (Human).